We begin with the raw amino-acid sequence, 433 residues long: Metacaspase-1 (433 aa).

The interval 1–123 (MYPGRAKPTY…PPSQVQHTGP (123 aa)) is disordered. Residues 9–44 (TYNNQQAQQAQSQVGYQTGYSNAQPQQQYYTAPQQQ) show a composition bias toward low complexity. 2 stretches are compositionally biased toward polar residues: residues 45–55 (NVSGSSMSFQH) and 83–109 (QQNYRNDIQQNHASGTVNGPSGYQQPQ). Residues His222 and Cys278 contribute to the active site.

It belongs to the peptidase C14B family.

Functionally, involved in cell death (apoptosis). In Kluyveromyces lactis (strain ATCC 8585 / CBS 2359 / DSM 70799 / NBRC 1267 / NRRL Y-1140 / WM37) (Yeast), this protein is Metacaspase-1 (MCA1).